We begin with the raw amino-acid sequence, 360 residues long: Peptide chain release factor 1 (360 aa).

N5-methylglutamine is present on Gln235. Residues 285–313 (KRQQAEASTRRNLLGSGDRSDRNRTYNFP) form a disordered region.

This sequence belongs to the prokaryotic/mitochondrial release factor family. Methylated by PrmC. Methylation increases the termination efficiency of RF1.

It is found in the cytoplasm. Its function is as follows. Peptide chain release factor 1 directs the termination of translation in response to the peptide chain termination codons UAG and UAA. This is Peptide chain release factor 1 from Shigella boydii serotype 18 (strain CDC 3083-94 / BS512).